The chain runs to 166 residues: UPF0304 protein VIBHAR_01542 (166 aa).

The protein belongs to the UPF0304 family.

In Vibrio campbellii (strain ATCC BAA-1116), this protein is UPF0304 protein VIBHAR_01542.